Consider the following 85-residue polypeptide: BmK AGP-SYPU2 (85 aa).

An N-terminal signal peptide occupies residues 1–19 (MNYMVIISLALLVMTGVES). Residues 21–83 (KDGYIADDRN…ARIMKPGRCN (63 aa)) enclose the LCN-type CS-alpha/beta domain. 4 cysteine pairs are disulfide-bonded: cysteine 31–cysteine 82, cysteine 35–cysteine 55, cysteine 41–cysteine 65, and cysteine 45–cysteine 67.

Belongs to the long (4 C-C) scorpion toxin superfamily. Sodium channel inhibitor family. Alpha subfamily. As to expression, expressed by the venom gland.

It localises to the secreted. Alpha toxins bind voltage-independently at site-3 of sodium channels (Nav) and inhibit the inactivation of the activated channels, thereby blocking neuronal transmission. Shows analgesic activity when intraperitoneally injected into mice. The sequence is that of BmK AGP-SYPU2 from Olivierus martensii (Manchurian scorpion).